The sequence spans 428 residues: Anaerobic glycerol-3-phosphate dehydrogenase subunit B (428 aa).

The protein belongs to the anaerobic G-3-P dehydrogenase subunit B family. As to quaternary structure, composed of a catalytic GlpA/B dimer and of membrane bound GlpC. FMN is required as a cofactor.

The enzyme catalyses a quinone + sn-glycerol 3-phosphate = dihydroxyacetone phosphate + a quinol. It participates in polyol metabolism; glycerol degradation via glycerol kinase pathway; glycerone phosphate from sn-glycerol 3-phosphate (anaerobic route): step 1/1. In terms of biological role, conversion of glycerol 3-phosphate to dihydroxyacetone. Uses fumarate or nitrate as electron acceptor. The sequence is that of Anaerobic glycerol-3-phosphate dehydrogenase subunit B from Actinobacillus pleuropneumoniae serotype 5b (strain L20).